A 120-amino-acid polypeptide reads, in one-letter code: NAD(P)H-quinone oxidoreductase subunit 3 (120 aa).

Transmembrane regions (helical) follow at residues 10-30 (FLGF…TNLI), 64-84 (MFAL…PWAV), and 89-109 (LGLL…IALA).

It belongs to the complex I subunit 3 family. In terms of assembly, NDH-1 can be composed of about 15 different subunits; different subcomplexes with different compositions have been identified which probably have different functions.

The protein resides in the cellular thylakoid membrane. The catalysed reaction is a plastoquinone + NADH + (n+1) H(+)(in) = a plastoquinol + NAD(+) + n H(+)(out). The enzyme catalyses a plastoquinone + NADPH + (n+1) H(+)(in) = a plastoquinol + NADP(+) + n H(+)(out). NDH-1 shuttles electrons from an unknown electron donor, via FMN and iron-sulfur (Fe-S) centers, to quinones in the respiratory and/or the photosynthetic chain. The immediate electron acceptor for the enzyme in this species is believed to be plastoquinone. Couples the redox reaction to proton translocation, and thus conserves the redox energy in a proton gradient. Cyanobacterial NDH-1 also plays a role in inorganic carbon-concentration. The polypeptide is NAD(P)H-quinone oxidoreductase subunit 3 (Prochlorococcus marinus (strain MIT 9215)).